We begin with the raw amino-acid sequence, 233 residues long: Transcriptional regulatory protein PrrA (233 aa).

In terms of domain architecture, Response regulatory spans 9–123; it reads RVLVVDDDSD…ELVARVKALL (115 aa). A 4-aspartylphosphate modification is found at aspartate 58. Positions 134 to 232 form a DNA-binding region, ompR/PhoB-type; the sequence is SETIAVGPLE…VRGVGFVLRM (99 aa).

Phosphorylated by PrrB at Asp-58.

It is found in the cytoplasm. Member of the two-component regulatory system PrrB/PrrA that is involved specifically in early intracellular multiplication of Mycobacterium and is essential for its viability. Upon phosphorylation by PrrB, functions as a transcription regulator by direct binding to promoter regions of target genes to positively regulate their expression. Autoregulates its own expression. The polypeptide is Transcriptional regulatory protein PrrA (prrA) (Mycobacterium leprae (strain TN)).